We begin with the raw amino-acid sequence, 357 residues long: Ribosomal RNA large subunit methyltransferase F (357 aa).

A compositionally biased stretch (polar residues) spans M1–A15. The disordered stretch occupies residues M1–R33.

This sequence belongs to the methyltransferase superfamily. METTL16/RlmF family.

It localises to the cytoplasm. The enzyme catalyses adenosine(1618) in 23S rRNA + S-adenosyl-L-methionine = N(6)-methyladenosine(1618) in 23S rRNA + S-adenosyl-L-homocysteine + H(+). Specifically methylates the adenine in position 1618 of 23S rRNA. In Shewanella putrefaciens (strain CN-32 / ATCC BAA-453), this protein is Ribosomal RNA large subunit methyltransferase F.